Consider the following 395-residue polypeptide: Ribosomal RNA large subunit methyltransferase G (395 aa).

The protein belongs to the methyltransferase superfamily. RlmG family.

The protein resides in the cytoplasm. It carries out the reaction guanosine(1835) in 23S rRNA + S-adenosyl-L-methionine = N(2)-methylguanosine(1835) in 23S rRNA + S-adenosyl-L-homocysteine + H(+). In terms of biological role, specifically methylates the guanine in position 1835 (m2G1835) of 23S rRNA. In Yersinia pseudotuberculosis serotype O:1b (strain IP 31758), this protein is Ribosomal RNA large subunit methyltransferase G.